A 356-amino-acid chain; its full sequence is S-adenosylmethionine:tRNA ribosyltransferase-isomerase (356 aa).

Belongs to the QueA family. As to quaternary structure, monomer.

The protein localises to the cytoplasm. It carries out the reaction 7-aminomethyl-7-carbaguanosine(34) in tRNA + S-adenosyl-L-methionine = epoxyqueuosine(34) in tRNA + adenine + L-methionine + 2 H(+). Its pathway is tRNA modification; tRNA-queuosine biosynthesis. In terms of biological role, transfers and isomerizes the ribose moiety from AdoMet to the 7-aminomethyl group of 7-deazaguanine (preQ1-tRNA) to give epoxyqueuosine (oQ-tRNA). The sequence is that of S-adenosylmethionine:tRNA ribosyltransferase-isomerase from Histophilus somni (strain 2336) (Haemophilus somnus).